Here is a 1446-residue protein sequence, read N- to C-terminus: Centrosomal protein of 164 kDa (1446 aa).

Positions 1 to 195 are interaction with ATRIP; it reads MARRPILLGD…PPQGLKAAAC (195 aa). The WW domain occupies 56-89; it reads APLPKGWKPCQNITGDLYYFNFDTGQSIWDHPCD. Disordered stretches follow at residues 106–132 and 159–185; these read PGAI…SKSP and PPSA…EPTL. Over residues 109–121 the composition is skewed to basic residues; that stretch reads IKKKDKKKKKEKK. Residues 164–176 show a composition bias toward polar residues; it reads RGSQSVSLGSSAD. Residue Ser202 is modified to Phosphoserine. Disordered stretches follow at residues 217–238, 250–408, 424–570, and 830–849; these read EETN…SSEL, GGNF…SFLG, GDTL…EPAA, and KRQE…KEEH. Positions 218-228 are enriched in acidic residues; it reads ETNEEDEEESD. The segment covering 257-277 has biased composition (basic and acidic residues); it reads ESPRTSQPDKKDVSLDSDADR. A compositionally biased stretch (polar residues) spans 288 to 312; sequence GADSSVASANGSKSQGRGASPWNPQ. Basic and acidic residues-rich tracts occupy residues 355 to 372 and 384 to 397; these read KEGE…KEAS and SEIH…RHSG. Residues 451 to 461 show a composition bias toward polar residues; that stretch reads SSIAEPQSKHT. Basic and acidic residues-rich tracts occupy residues 490 to 499 and 525 to 534; these read PEWKEAEGPG and ERAEEKHSQA. Positions 1143–1197 form a coiled coil; the sequence is EVLGNMRKNLNEETRHLDEMKSAMRKGHDLLKKKEEKLIQLESSLQEEVSDEDTL. Positions 1261-1287 are disordered; the sequence is LGSLNSQPPPQGLGSQPPPPLFTSSLR. Residues 1267-1281 are compositionally biased toward pro residues; the sequence is QPPPQGLGSQPPPPL. Phosphoserine occurs at positions 1369 and 1371.

As to quaternary structure, interacts (via N-terminus) with ATRIP. Interacts with ATM, ATR and MDC1. Interacts with XPA (via N-terminus) upon UV irradiation. Interacts with CEP83, CCDC92, TTBK2, DVL3, NPHP3 and weakly with NPHP4. Interacts with DZIP1.

The protein localises to the cytoplasm. The protein resides in the cytoskeleton. It localises to the microtubule organizing center. Its subcellular location is the centrosome. It is found in the centriole. The protein localises to the nucleus. In terms of biological role, plays a role in microtubule organization and/or maintenance for the formation of primary cilia (PC), a microtubule-based structure that protrudes from the surface of epithelial cells. Plays a critical role in G2/M checkpoint and nuclear divisions. A key player in the DNA damage-activated ATR/ATM signaling cascade since it is required for the proper phosphorylation of H2AX, RPA, CHEK2 and CHEK1. Plays a critical role in chromosome segregation, acting as a mediator required for the maintenance of genomic stability through modulation of MDC1, RPA and CHEK1. The protein is Centrosomal protein of 164 kDa of Mus musculus (Mouse).